Reading from the N-terminus, the 377-residue chain is Succinyl-diaminopimelate desuccinylase (377 aa).

Zn(2+) is bound at residue H68. D70 is a catalytic residue. Zn(2+) is bound at residue D101. E135 acts as the Proton acceptor in catalysis. The Zn(2+) site is built by E136, E164, and H350.

The protein belongs to the peptidase M20A family. DapE subfamily. In terms of assembly, homodimer. Requires Zn(2+) as cofactor. The cofactor is Co(2+).

The catalysed reaction is N-succinyl-(2S,6S)-2,6-diaminopimelate + H2O = (2S,6S)-2,6-diaminopimelate + succinate. It participates in amino-acid biosynthesis; L-lysine biosynthesis via DAP pathway; LL-2,6-diaminopimelate from (S)-tetrahydrodipicolinate (succinylase route): step 3/3. Functionally, catalyzes the hydrolysis of N-succinyl-L,L-diaminopimelic acid (SDAP), forming succinate and LL-2,6-diaminopimelate (DAP), an intermediate involved in the bacterial biosynthesis of lysine and meso-diaminopimelic acid, an essential component of bacterial cell walls. This is Succinyl-diaminopimelate desuccinylase from Psychromonas ingrahamii (strain DSM 17664 / CCUG 51855 / 37).